Reading from the N-terminus, the 329-residue chain is Peroxidase 18 (329 aa).

Residues 1–29 form the signal peptide; that stretch reads MALQFFSCKPKYTFLSSLLLLLLLSSSVA. 4 disulfides stabilise this stretch: cysteine 40–cysteine 116, cysteine 73–cysteine 78, cysteine 122–cysteine 325, and cysteine 201–cysteine 235. The Proton acceptor role is filled by histidine 71. Ca(2+) contacts are provided by aspartate 72, valine 75, glycine 77, aspartate 79, and serine 81. Residue asparagine 87 is glycosylated (N-linked (GlcNAc...) asparagine). Isoleucine 164 provides a ligand contact to substrate. Histidine 194 provides a ligand contact to heme b. Threonine 195 lines the Ca(2+) pocket. Positions 249, 252, and 257 each coordinate Ca(2+).

The protein belongs to the peroxidase family. Classical plant (class III) peroxidase subfamily. Heme b is required as a cofactor. Requires Ca(2+) as cofactor.

Its subcellular location is the secreted. The enzyme catalyses 2 a phenolic donor + H2O2 = 2 a phenolic radical donor + 2 H2O. Removal of H(2)O(2), oxidation of toxic reductants, biosynthesis and degradation of lignin, suberization, auxin catabolism, response to environmental stresses such as wounding, pathogen attack and oxidative stress. These functions might be dependent on each isozyme/isoform in each plant tissue. This is Peroxidase 18 (PER18) from Arabidopsis thaliana (Mouse-ear cress).